Here is a 233-residue protein sequence, read N- to C-terminus: Orotidine 5'-phosphate decarboxylase (233 aa).

Substrate is bound by residues aspartate 13, lysine 35, aspartate 62–threonine 71, threonine 122, arginine 182, glutamine 191, glycine 211, and arginine 212. Lysine 64 acts as the Proton donor in catalysis.

It belongs to the OMP decarboxylase family. Type 1 subfamily. In terms of assembly, homodimer.

It carries out the reaction orotidine 5'-phosphate + H(+) = UMP + CO2. It participates in pyrimidine metabolism; UMP biosynthesis via de novo pathway; UMP from orotate: step 2/2. In terms of biological role, catalyzes the decarboxylation of orotidine 5'-monophosphate (OMP) to uridine 5'-monophosphate (UMP). In Pseudomonas putida (strain W619), this protein is Orotidine 5'-phosphate decarboxylase.